A 93-amino-acid chain; its full sequence is Large ribosomal subunit protein uL23cy (93 aa).

The protein belongs to the universal ribosomal protein uL23 family. In terms of assembly, part of the 50S ribosomal subunit.

Its subcellular location is the plastid. The protein localises to the chloroplast. Binds to 23S rRNA. This is Large ribosomal subunit protein uL23cy (rpl23-B) from Agrostis stolonifera (Creeping bentgrass).